Consider the following 205-residue polypeptide: Probable GTP-binding protein EngB (205 aa).

Residues 27-201 (EGMEIAFAGR…AAKLDSWFSS (175 aa)) enclose the EngB-type G domain. Residues 35–42 (GRSNAGKS), 62–66 (GRTQL), 80–83 (DLPG), 147–150 (TKAD), and 180–182 (FSA) each bind GTP. Positions 42 and 64 each coordinate Mg(2+).

It belongs to the TRAFAC class TrmE-Era-EngA-EngB-Septin-like GTPase superfamily. EngB GTPase family. It depends on Mg(2+) as a cofactor.

In terms of biological role, necessary for normal cell division and for the maintenance of normal septation. The polypeptide is Probable GTP-binding protein EngB (Mannheimia succiniciproducens (strain KCTC 0769BP / MBEL55E)).